Here is a 233-residue protein sequence, read N- to C-terminus: Ribose-5-phosphate isomerase A (233 aa).

Substrate is bound by residues S31–T34, D87–D90, and K100–G103. E109 acts as the Proton acceptor in catalysis. K127 serves as a coordination point for substrate.

Belongs to the ribose 5-phosphate isomerase family. As to quaternary structure, homodimer.

It carries out the reaction aldehydo-D-ribose 5-phosphate = D-ribulose 5-phosphate. It participates in carbohydrate degradation; pentose phosphate pathway; D-ribose 5-phosphate from D-ribulose 5-phosphate (non-oxidative stage): step 1/1. Functionally, catalyzes the reversible conversion of ribose-5-phosphate to ribulose 5-phosphate. The sequence is that of Ribose-5-phosphate isomerase A from Chlamydia felis (strain Fe/C-56) (Chlamydophila felis).